Here is a 248-residue protein sequence, read N- to C-terminus: GTP cyclohydrolase 1 type 2 homolog (248 aa).

The a divalent metal cation site is built by histidine 64, histidine 65, aspartate 101, histidine 216, and glutamate 220.

Belongs to the GTP cyclohydrolase I type 2/NIF3 family. As to quaternary structure, homohexamer.

This Borreliella burgdorferi (strain ATCC 35210 / DSM 4680 / CIP 102532 / B31) (Borrelia burgdorferi) protein is GTP cyclohydrolase 1 type 2 homolog.